The following is a 259-amino-acid chain: 3-methyl-2-oxobutanoate hydroxymethyltransferase (259 aa).

Positions 44 and 83 each coordinate Mg(2+). Residues 44-45 (DS), aspartate 83, and lysine 112 each bind 3-methyl-2-oxobutanoate. Glutamate 114 contributes to the Mg(2+) binding site. Glutamate 177 functions as the Proton acceptor in the catalytic mechanism.

The protein belongs to the PanB family. As to quaternary structure, homodecamer; pentamer of dimers. It depends on Mg(2+) as a cofactor.

The protein localises to the cytoplasm. The catalysed reaction is 3-methyl-2-oxobutanoate + (6R)-5,10-methylene-5,6,7,8-tetrahydrofolate + H2O = 2-dehydropantoate + (6S)-5,6,7,8-tetrahydrofolate. It participates in cofactor biosynthesis; (R)-pantothenate biosynthesis; (R)-pantoate from 3-methyl-2-oxobutanoate: step 1/2. Catalyzes the reversible reaction in which hydroxymethyl group from 5,10-methylenetetrahydrofolate is transferred onto alpha-ketoisovalerate to form ketopantoate. This Nitratiruptor sp. (strain SB155-2) protein is 3-methyl-2-oxobutanoate hydroxymethyltransferase.